The sequence spans 180 residues: ATP-dependent protease subunit HslV (180 aa).

The active site involves Thr7. Na(+)-binding residues include Ala165, Cys168, and Thr171.

Belongs to the peptidase T1B family. HslV subfamily. A double ring-shaped homohexamer of HslV is capped on each side by a ring-shaped HslU homohexamer. The assembly of the HslU/HslV complex is dependent on binding of ATP.

The protein resides in the cytoplasm. It catalyses the reaction ATP-dependent cleavage of peptide bonds with broad specificity.. With respect to regulation, allosterically activated by HslU binding. Protease subunit of a proteasome-like degradation complex believed to be a general protein degrading machinery. This chain is ATP-dependent protease subunit HslV, found in Geobacillus sp. (strain WCH70).